A 218-amino-acid polypeptide reads, in one-letter code: Small ribosomal subunit protein uS3 (218 aa).

Positions isoleucine 38–lysine 106 constitute a KH type-2 domain.

The protein belongs to the universal ribosomal protein uS3 family. As to quaternary structure, part of the 30S ribosomal subunit. Forms a tight complex with proteins S10 and S14.

Its function is as follows. Binds the lower part of the 30S subunit head. Binds mRNA in the 70S ribosome, positioning it for translation. The polypeptide is Small ribosomal subunit protein uS3 (Bacillus subtilis (strain 168)).